A 487-amino-acid chain; its full sequence is Fibroblast growth factor receptor-like 1 (487 aa).

The first 18 residues, Met1–Ser18, serve as a signal peptide directing secretion. Topologically, residues Ala19–Pro371 are extracellular. In terms of domain architecture, Ig-like C2-type 1 spans Pro23–Ile109. Cys45 and Cys93 are disulfide-bonded. The N-linked (GlcNAc...) asparagine glycan is linked to Asn105. Positions Ser115–Gly125 are enriched in polar residues. The disordered stretch occupies residues Ser115 to Ala147. 2 Ig-like C2-type domains span residues Pro141–Glu231 and Pro240–Thr348. Cys166 and Cys215 are oxidised to a cystine. N-linked (GlcNAc...) asparagine glycosylation is found at Asn225, Asn249, and Asn287. Cys262 and Cys332 are oxidised to a cystine. A helical transmembrane segment spans residues Val372–Cys392. At Gln393–Cys487 the chain is on the cytoplasmic side.

Interacts with heparin and FGF2. In terms of tissue distribution, expressed in cartilaginous structures.

It localises to the cell membrane. Its function is as follows. Has a negative effect on cell proliferation. This chain is Fibroblast growth factor receptor-like 1 (FGFRL1), found in Gallus gallus (Chicken).